Consider the following 230-residue polypeptide: MDLDILKQTAARRAVELVEDGMVVGLGTGSTAAFAVSVLAERVRLGLRVVGIPTSERTARQAEAEGIVLGTLAEQSRVDLTIDGADEVALGELALIKGLGGALLREKIVAAASERLIIIVDATKLVEQLGSHGPLPVEVAPFGWQATARALERLGAEVNLRAQHGQAFLTDGGHYILDCRFGPIARPAELEAAIDRIPGVVESGLFVGMASAVIVADEGGIEVLTPSAAP.

Substrate-binding positions include 28-31 (TGST), 83-86 (DGAD), and 97-100 (KGLG). E106 acts as the Proton acceptor in catalysis. K124 contacts substrate.

It belongs to the ribose 5-phosphate isomerase family. As to quaternary structure, homodimer.

The catalysed reaction is aldehydo-D-ribose 5-phosphate = D-ribulose 5-phosphate. Its pathway is carbohydrate degradation; pentose phosphate pathway; D-ribose 5-phosphate from D-ribulose 5-phosphate (non-oxidative stage): step 1/1. Its function is as follows. Catalyzes the reversible conversion of ribose-5-phosphate to ribulose 5-phosphate. This is Ribose-5-phosphate isomerase A from Gloeobacter violaceus (strain ATCC 29082 / PCC 7421).